Here is a 147-residue protein sequence, read N- to C-terminus: HTH-type transcriptional regulator HmrR (147 aa).

One can recognise an HTH merR-type domain in the interval methionine 1–leucine 69. A DNA-binding region (H-T-H motif) is located at residues glycine 4 to isoleucine 23.

In terms of assembly, homodimer.

Its subcellular location is the cytoplasm. Its function is as follows. Regulates the transcription of actP. It detects cytoplasmic copper stress and activates transcription in response to increasing copper concentrations. In the absence of copper, it negatively regulates the transcription of actP. This chain is HTH-type transcriptional regulator HmrR (hmrR), found in Sinorhizobium medicae (strain WSM419) (Ensifer medicae).